The following is a 74-amino-acid chain: DNA-directed RNA polymerase subunit omega (74 aa).

It belongs to the RNA polymerase subunit omega family. The RNAP catalytic core consists of 2 alpha, 1 beta, 1 beta' and 1 omega subunit. When a sigma factor is associated with the core the holoenzyme is formed, which can initiate transcription.

It catalyses the reaction RNA(n) + a ribonucleoside 5'-triphosphate = RNA(n+1) + diphosphate. In terms of biological role, promotes RNA polymerase assembly. Latches the N- and C-terminal regions of the beta' subunit thereby facilitating its interaction with the beta and alpha subunits. This is DNA-directed RNA polymerase subunit omega from Helicobacter acinonychis (strain Sheeba).